The sequence spans 877 residues: MAKKPVTPASKVAAKQAAVRSRHQEDVFTLDPLIDPIFQKGELRSYLVTEPSPSVLKKRSIHTKEYWMLSSLLLIAFYVRMYNLSNPNSVVFDEVHFGGFARKYILGTFFMDVHPPLAKMLFGAVGAIGGFKGDFEFKSIGDKFPDSTPYIFMRQFPALLGVGTVILCYLTLRQSGVRPIIAYITTFLLIIENSNVTISRYILLDSPLIFFIAAAIYAWKKFEIQIPFTFGWYRSLLATGIALGLALSSKWVGLFTVAWVGFLCIYQLWFLIGDLSVSTKKIWGHFFARGIILLGVPIALYLGFFAIHFQLLNKEGDGGAFMSSAFRAGLQGNKIPRDITEQVGLGSVVTIRHVDTQGGYLHSHEHFYQTGSKQQQITLYPHLDSNNKWLIEPYNGTIHNETFVPLINGMKIRLKHINTGRRLHSHDEKPPVSERDWQKECSCYGYDGFAGDANDDWVVEIVNYRSQKGEAQTFVKAINTIFRLRHAMTGHYLFSSEVKLPEWGFGQQEVTSASQGKRALTHWYIETNENSILPPSEAKIINYPKLSLWQKVVESHKRMWKINQGLTSHHHWQSSPSEWPLLLRGINYWNKEHKQVYLLGNAVTWWAATLSIITFGTYVLVTVFRWHLGTPLSTNKHVFNFNVQTFSYVLGWALHYLPFFIMGRQLFLHHYLPALYFGILALGHFFEIFTGYLTSRSKYFQQVAFVLVGLFSILSLVFYVNYSSLIYGTPWTKASCELTKPFSGWDYNCGTFFDTLGEYDIQEKSLASESEIPTETVVVEAKQTPKAEPKLAKQDDHIESPAAAEPVEEKEVKEEVEQLAPPLAVDFEEETPKVEDPQVADVDASSNDEKSVEEKQQQEQQQEQEQVEDESVHQVQQ.

N83 is a glycosylation site (N-linked (GlcNAc...) asparagine). 2 helical membrane passes run 109-129 and 150-170; these read FFMDVHPPLAKMLFGAVGAIG and YIFMRQFPALLGVGTVILCYL. The N-linked (GlcNAc...) asparagine glycan is linked to N195. Transmembrane regions (helical) follow at residues 196-216, 226-246, 252-272, and 291-311; these read VTISRYILLDSPLIFFIAAAI, IPFTFGWYRSLLATGIALGLA, VGLFTVAWVGFLCIYQLWFLI, and IILLGVPIALYLGFFAIHFQL. Positions 340–394 constitute an MIR 1 domain; the sequence is TEQVGLGSVVTIRHVDTQGGYLHSHEHFYQTGSKQQQITLYPHLDSNNKWLIEPY. 2 N-linked (GlcNAc...) asparagine glycosylation sites follow: N395 and N400. 2 MIR domains span residues 403 to 462 and 472 to 528; these read FVPL…VEIV and QTFV…IETN. A run of 4 helical transmembrane segments spans residues 604–624, 643–663, 666–686, and 700–720; these read TWWAATLSIITFGTYVLVTVF, VQTFSYVLGWALHYLPFFIMG, LFLHHYLPALYFGILALGHFF, and FQQVAFVLVGLFSILSLVFYV. The N-linked (GlcNAc...) asparagine glycan is linked to N721. Positions 778 to 877 are disordered; sequence VVEAKQTPKA…EDESVHQVQQ (100 aa). 3 stretches are compositionally biased toward basic and acidic residues: residues 783–799, 807–816, and 847–857; these read QTPKAEPKLAKQDDHIE, VEEKEVKEEV, and NDEKSVEEKQQ.

This sequence belongs to the glycosyltransferase 39 family. In terms of assembly, PMT1 and PMT2 form a functional heterodimer.

The protein resides in the endoplasmic reticulum membrane. It carries out the reaction a di-trans,poly-cis-dolichyl beta-D-mannosyl phosphate + L-seryl-[protein] = 3-O-(alpha-D-mannosyl)-L-seryl-[protein] + a di-trans,poly-cis-dolichyl phosphate + H(+). It catalyses the reaction a di-trans,poly-cis-dolichyl beta-D-mannosyl phosphate + L-threonyl-[protein] = 3-O-(alpha-D-mannosyl)-L-threonyl-[protein] + a di-trans,poly-cis-dolichyl phosphate + H(+). It functions in the pathway protein modification; protein glycosylation. Functionally, protein mannosyltransferase (PMT) involved in hyphal growth and drug sensitivity. Transfers mannose from Dol-P-mannose to Ser or Thr residues on proteins. PMT1, PMT2 and PMT4 account for most of the protein-O-glycosylation activity, while PMT5 and PMT6 may specifically modulate a much narrower spectrum of target proteins. Accounts for the O-glycosylation of the cell wall proteins KRE9, PIR2, RHD3, and ALS1, as well as the SEC20 t-SNARE component. O-glycosylation of SEC20 is essential for its stability. Required for filamentation and early phases of biofilm formation. The protein is Dolichyl-phosphate-mannose--protein mannosyltransferase 1 (PMT1) of Candida albicans (strain SC5314 / ATCC MYA-2876) (Yeast).